Consider the following 379-residue polypeptide: Heme A synthase (379 aa).

A disordered region spans residues Met-1–Arg-28. The next 8 helical transmembrane spans lie at Val-35–Leu-55, Phe-124–Val-144, Leu-150–Ser-170, Arg-183–Leu-203, Ala-227–Ile-247, Phe-287–Ala-307, Ala-318–Met-338, and Ser-341–Leu-361. His-289 is a heme binding site. Residue His-349 participates in heme binding.

The protein belongs to the COX15/CtaA family. Type 2 subfamily. Interacts with CtaB. Requires heme b as cofactor.

The protein resides in the cell membrane. It carries out the reaction Fe(II)-heme o + 2 A + H2O = Fe(II)-heme a + 2 AH2. It functions in the pathway porphyrin-containing compound metabolism; heme A biosynthesis; heme A from heme O: step 1/1. Its function is as follows. Catalyzes the conversion of heme O to heme A by two successive hydroxylations of the methyl group at C8. The first hydroxylation forms heme I, the second hydroxylation results in an unstable dihydroxymethyl group, which spontaneously dehydrates, resulting in the formyl group of heme A. The sequence is that of Heme A synthase from Jannaschia sp. (strain CCS1).